Reading from the N-terminus, the 652-residue chain is Iron-regulated outer membrane virulence protein (652 aa).

Residues 1–25 (MSRFNPSPVSLSVTLGLMFSASAFA) form the signal peptide. Positions 33-40 (ETMVVTAA) match the TonB box motif. The 118-residue stretch at 45–162 (VIQNAPASIS…IGGVINIITR (118 aa)) folds into the TBDR plug domain. Residues 167 to 652 (QWSGNVQLST…RYWLGLDIAF (486 aa)) enclose the TBDR beta-barrel domain. The short motif at 635–652 (YGYVEDGRRYWLGLDIAF) is the TonB C-terminal box element.

This sequence belongs to the TonB-dependent receptor family.

It is found in the cell outer membrane. Its function is as follows. Involved in the initial step of iron uptake by binding ferric vibriobactin, an iron chelatin siderophore that allows V.cholerae to extract iron from the environment. The polypeptide is Iron-regulated outer membrane virulence protein (irgA) (Vibrio cholerae serotype O1 (strain ATCC 39315 / El Tor Inaba N16961)).